The chain runs to 571 residues: Proline--tRNA ligase (571 aa).

The protein belongs to the class-II aminoacyl-tRNA synthetase family. ProS type 1 subfamily. As to quaternary structure, homodimer.

It is found in the cytoplasm. The enzyme catalyses tRNA(Pro) + L-proline + ATP = L-prolyl-tRNA(Pro) + AMP + diphosphate. In terms of biological role, catalyzes the attachment of proline to tRNA(Pro) in a two-step reaction: proline is first activated by ATP to form Pro-AMP and then transferred to the acceptor end of tRNA(Pro). As ProRS can inadvertently accommodate and process non-cognate amino acids such as alanine and cysteine, to avoid such errors it has two additional distinct editing activities against alanine. One activity is designated as 'pretransfer' editing and involves the tRNA(Pro)-independent hydrolysis of activated Ala-AMP. The other activity is designated 'posttransfer' editing and involves deacylation of mischarged Ala-tRNA(Pro). The misacylated Cys-tRNA(Pro) is not edited by ProRS. This Thermodesulfovibrio yellowstonii (strain ATCC 51303 / DSM 11347 / YP87) protein is Proline--tRNA ligase.